A 582-amino-acid chain; its full sequence is uncharacterized protein (582 aa).

The next 6 helical transmembrane spans lie at Val17–Val37, Leu57–Tyr77, Met131–Ile151, Ala156–Ile176, Ala239–Phe259, and Val271–Ala291. The ABC transmembrane type-1 domain occupies Val17 to Arg300. The ABC transporter domain maps to Val335–Ser571. ATP is bound at residue Gly369–Ser376.

The protein belongs to the ABC transporter superfamily.

Its subcellular location is the cell membrane. This is an uncharacterized protein from Mycobacterium tuberculosis (strain CDC 1551 / Oshkosh).